A 328-amino-acid chain; its full sequence is MTVPIAIIGTGIAGLSAAQALTSAGHQVHLFDKSRGSGGRMSSKRSDAGSLDMGAQYFTARDRRFATAVKQWQAQGHVSEWTPLLYNFHGGRLSPSPDEQVRWVGEPGMSAITRAMRGDLPVSFSCRITDVFRGEQHWNLLDAEGENHGPFSHVIIATPAPQATALLAAAPKLASVVAGVKMDPTWAVALAFETPLQTPMQGCFVQDSPLDWLARNRSKPGRDDTLDSWVLHATSQWSRQNLDASREQVIEHLHGAFAELIDCAMPAPVFSLAHRWLYARPAGSHEWGALSDADLGIYVCGDWCLSGRVEGAWLSGQEAARRLLEHLQ.

FAD-binding positions include Ala13, 32–33, Arg40, and 56–57; these read DK and QY. Substrate is bound by residues 57 to 61 and 96 to 98; these read YFTAR and SPD. FAD is bound at residue Ile128. Thr185 contributes to the substrate binding site. Asp302 is an FAD binding site. Arg308 contacts substrate. Val309 is a binding site for FAD.

This sequence belongs to the bacterial renalase family. Requires FAD as cofactor.

The catalysed reaction is 1,2-dihydro-beta-NAD + O2 + H(+) = H2O2 + NAD(+). The enzyme catalyses 1,2-dihydro-beta-NADP + O2 + H(+) = H2O2 + NADP(+). It catalyses the reaction 1,6-dihydro-beta-NADP + O2 + H(+) = H2O2 + NADP(+). It carries out the reaction 1,6-dihydro-beta-NAD + O2 + H(+) = H2O2 + NAD(+). In terms of biological role, catalyzes the oxidation of the 1,2-dihydro- and 1,6-dihydro- isomeric forms of beta-NAD(P) back to beta-NAD(P)+. Has a preference for 1,2-dihydro-beta-NAD as substrate. May serve to protect primary metabolism dehydrogenases from inhibition by the 1,2-dihydro- and 1,6-dihydro-beta-NAD(P) isomers. The polypeptide is Renalase (Pseudomonas savastanoi pv. phaseolicola (strain 1448A / Race 6) (Pseudomonas syringae pv. phaseolicola (strain 1448A / Race 6))).